The chain runs to 467 residues: Ribulose bisphosphate carboxylase large chain (467 aa).

K6 is modified (N6,N6,N6-trimethyllysine). The substrate site is built by N115 and T165. The Proton acceptor role is filled by K167. Residue K169 participates in substrate binding. Residues K193, D195, and E196 each contribute to the Mg(2+) site. K193 is subject to N6-carboxylysine. The active-site Proton acceptor is the H286. Substrate is bound by residues R287, H319, and S371.

Belongs to the RuBisCO large chain family. Type I subfamily. As to quaternary structure, heterohexadecamer of 8 large chains and 8 small chains; disulfide-linked. The disulfide link is formed within the large subunit homodimers. Mg(2+) is required as a cofactor. Post-translationally, the disulfide bond which can form in the large chain dimeric partners within the hexadecamer appears to be associated with oxidative stress and protein turnover.

Its subcellular location is the plastid. It is found in the chloroplast. The catalysed reaction is 2 (2R)-3-phosphoglycerate + 2 H(+) = D-ribulose 1,5-bisphosphate + CO2 + H2O. It catalyses the reaction D-ribulose 1,5-bisphosphate + O2 = 2-phosphoglycolate + (2R)-3-phosphoglycerate + 2 H(+). RuBisCO catalyzes two reactions: the carboxylation of D-ribulose 1,5-bisphosphate, the primary event in carbon dioxide fixation, as well as the oxidative fragmentation of the pentose substrate in the photorespiration process. Both reactions occur simultaneously and in competition at the same active site. In Cedrus atlantica (Atlas cedar), this protein is Ribulose bisphosphate carboxylase large chain.